The sequence spans 81 residues: ATP synthase subunit c (81 aa).

The next 2 membrane-spanning stretches (helical) occupy residues 7 to 27 (AASV…PGLG) and 57 to 77 (FAFM…LLFA).

This sequence belongs to the ATPase C chain family. As to quaternary structure, F-type ATPases have 2 components, F(1) - the catalytic core - and F(0) - the membrane proton channel. F(1) has five subunits: alpha(3), beta(3), gamma(1), delta(1), epsilon(1). F(0) has four main subunits: a(1), b(1), b'(1) and c(10-14). The alpha and beta chains form an alternating ring which encloses part of the gamma chain. F(1) is attached to F(0) by a central stalk formed by the gamma and epsilon chains, while a peripheral stalk is formed by the delta, b and b' chains.

The protein localises to the cellular thylakoid membrane. F(1)F(0) ATP synthase produces ATP from ADP in the presence of a proton or sodium gradient. F-type ATPases consist of two structural domains, F(1) containing the extramembraneous catalytic core and F(0) containing the membrane proton channel, linked together by a central stalk and a peripheral stalk. During catalysis, ATP synthesis in the catalytic domain of F(1) is coupled via a rotary mechanism of the central stalk subunits to proton translocation. Its function is as follows. Key component of the F(0) channel; it plays a direct role in translocation across the membrane. A homomeric c-ring of between 10-14 subunits forms the central stalk rotor element with the F(1) delta and epsilon subunits. The chain is ATP synthase subunit c from Prochlorococcus marinus (strain MIT 9301).